Reading from the N-terminus, the 365-residue chain is N-acetylgalactosamine-N,N'-diacetylbacillosaminyl-diphospho-undecaprenol 4-alpha-N-acetylgalactosaminyltransferase (365 aa).

This sequence belongs to the glycosyltransferase group 1 family.

It localises to the cell inner membrane. It carries out the reaction N-acetyl-alpha-D-galactosaminyl-(1-&gt;3)-N,N'-diacetyl-alpha-D-bacillosaminyl-tri-trans,hepta-cis-undecaprenyl diphosphate + UDP-N-acetyl-alpha-D-galactosamine = N-acetyl-alpha-D-galactosaminyl-(1-&gt;4)-N-acetyl-alpha-D-galactosaminyl-(1-&gt;3)-N,N'-diacetyl-alpha-D-bacillosaminyl-tri-trans,heptacis-undecaprenyl diphosphate + UDP + H(+). The protein operates within protein modification; protein glycosylation. In terms of biological role, adds a GalNAc residue on to the Und-PP-Bac2,4diNAc-GalNAc disaccharide in the N-linked protein glycosylation pathway. Transfers the third sugar in the heptasaccharide biosynthesis. The protein is N-acetylgalactosamine-N,N'-diacetylbacillosaminyl-diphospho-undecaprenol 4-alpha-N-acetylgalactosaminyltransferase (pglJ) of Campylobacter jejuni subsp. jejuni serotype O:2 (strain ATCC 700819 / NCTC 11168).